The sequence spans 297 residues: CASP-like protein 4A2 (297 aa).

Over residues 1–20 the composition is skewed to polar residues; sequence MKMKRTASSNSEAQSYNESP. The disordered stretch occupies residues 1–135; that stretch reads MKMKRTASSN…PINGEESTRT (135 aa). Over 1 to 149 the chain is Cytoplasmic; it reads MKMKRTASSN…ARGDDLVSLT (149 aa). The segment covering 69–83 has biased composition (pro residues); it reads LPSPIPPPPPQFPPP. The helical transmembrane segment at 150-170 threads the bilayer; that stretch reads ALGFRITEVILCVISFSIMAA. The Extracellular portion of the chain corresponds to 171–191; that stretch reads DKTQGWSGDSYDRYKEYRYCL. Residues 192-212 form a helical membrane-spanning segment; it reads AVNVIAFVYSAFEACDAACYI. At 213–225 the chain is on the cytoplasmic side; it reads AKESYMINCGFHD. The chain crosses the membrane as a helical span at residues 226–246; that stretch reads LFVFSMDQLLAYLLMSASSCA. Residues 247–265 lie on the Extracellular side of the membrane; sequence ATRVDDWVSNWGKDEFTQM. The chain crosses the membrane as a helical span at residues 266–286; sequence ATASIAVSFLAFGAFAVSALI. The Cytoplasmic portion of the chain corresponds to 287-297; it reads SSYRLFTHASS.

Belongs to the Casparian strip membrane proteins (CASP) family. As to quaternary structure, homodimer and heterodimers.

The protein resides in the cell membrane. This is CASP-like protein 4A2 from Arabidopsis thaliana (Mouse-ear cress).